A 218-amino-acid chain; its full sequence is uncharacterized protein (218 aa).

This is an uncharacterized protein from Rickettsia prowazekii (strain Madrid E).